A 299-amino-acid chain; its full sequence is GTPase Era (299 aa).

The Era-type G domain occupies 4-171 (KSGFVAILGR…MEILKENLDE (168 aa)). Residues 12-19 (GRPNVGKS) form a G1 region. 12–19 (GRPNVGKS) lines the GTP pocket. Positions 38-42 (QTTRN) are G2. The interval 59-62 (DTPG) is G3. GTP-binding positions include 59-63 (DTPGI) and 121-124 (NKID). The tract at residues 121–124 (NKID) is G4. The interval 150 to 152 (ISA) is G5. The KH type-2 domain occupies 202–280 (TREEIPHSVA…FLETWVKVKK (79 aa)).

This sequence belongs to the TRAFAC class TrmE-Era-EngA-EngB-Septin-like GTPase superfamily. Era GTPase family. As to quaternary structure, monomer.

It localises to the cytoplasm. Its subcellular location is the cell membrane. Functionally, an essential GTPase that binds both GDP and GTP, with rapid nucleotide exchange. Plays a role in 16S rRNA processing and 30S ribosomal subunit biogenesis and possibly also in cell cycle regulation and energy metabolism. The chain is GTPase Era from Streptococcus suis (strain 98HAH33).